We begin with the raw amino-acid sequence, 147 residues long: UPF0306 protein YhbP (147 aa).

It belongs to the UPF0306 family.

The protein is UPF0306 protein YhbP of Escherichia coli O6:K15:H31 (strain 536 / UPEC).